The primary structure comprises 157 residues: 3-hydroxyacyl-[acyl-carrier-protein] dehydratase FabZ (157 aa).

H58 is an active-site residue.

The protein belongs to the thioester dehydratase family. FabZ subfamily.

The protein localises to the cytoplasm. It catalyses the reaction a (3R)-hydroxyacyl-[ACP] = a (2E)-enoyl-[ACP] + H2O. In terms of biological role, involved in unsaturated fatty acids biosynthesis. Catalyzes the dehydration of short chain beta-hydroxyacyl-ACPs and long chain saturated and unsaturated beta-hydroxyacyl-ACPs. In Brucella abortus biovar 1 (strain 9-941), this protein is 3-hydroxyacyl-[acyl-carrier-protein] dehydratase FabZ.